A 2287-amino-acid chain; its full sequence is Serine/threonine-protein kinase MEC1 (2287 aa).

An FAT domain is found at 1310-1864 (TLAKKSLETD…LWYISILLNS (555 aa)). The region spanning 1968–2271 (FSSQYMVFNS…QVEALTQESC (304 aa)) is the PI3K/PI4K catalytic domain. Residues 1974–1980 (VFNSLKK) are G-loop. The tract at residues 2140–2148 (GLGDRHCEN) is catalytic loop. Positions 2160–2184 (HVDFDCLFEKGKKLPVPEIVPFRLT) are activation loop. Residues 2255 to 2287 (LALSVSGQVEALTQESCSVENLSKMYIGWLPFW) form the FATC domain.

The protein belongs to the PI3/PI4-kinase family. ATM subfamily.

The protein resides in the nucleus. The enzyme catalyses L-seryl-[protein] + ATP = O-phospho-L-seryl-[protein] + ADP + H(+). It catalyses the reaction L-threonyl-[protein] + ATP = O-phospho-L-threonyl-[protein] + ADP + H(+). Serine/threonine protein kinase which activates checkpoint signaling upon genotoxic stresses such as ionizing radiation (IR), ultraviolet light (UV), or DNA replication stalling, thereby acting as a DNA damage sensor. Recognizes the substrate consensus sequence [ST]-Q. Recruited to DNA lesions in order to initiate the DNA repair by homologous recombination. Phosphorylates histone H2A to form H2AS128ph (gamma-H2A) at sites of DNA damage, also involved in the regulation of DNA damage response mechanism. Required for cell growth and meiotic recombination. This Kluyveromyces lactis (strain ATCC 8585 / CBS 2359 / DSM 70799 / NBRC 1267 / NRRL Y-1140 / WM37) (Yeast) protein is Serine/threonine-protein kinase MEC1 (MEC1).